The following is a 147-amino-acid chain: Protein phosphatase 1 regulatory subunit 14B (147 aa).

The segment at M1–K55 is disordered. An N-acetylalanine modification is found at A2. S21 bears the Phosphoserine mark. At Y29 the chain carries Phosphotyrosine. S32 carries the phosphoserine modification. T57 bears the Phosphothreonine mark. The stretch at D61–M103 forms a coiled coil.

It belongs to the PP1 inhibitor family. Phosphorylated primarily on Thr-57 by PKC (in vitro). An unknown Ser is also phosphorylated by PKC (in vitro). In terms of tissue distribution, ubiquitous. Expressed at low levels.

It is found in the cytoplasm. Functionally, inhibitor of PPP1CA. Has over 50-fold higher inhibitory activity when phosphorylated. The polypeptide is Protein phosphatase 1 regulatory subunit 14B (PPP1R14B) (Homo sapiens (Human)).